Reading from the N-terminus, the 245-residue chain is DNA polymerase zeta processivity subunit (245 aa).

Residues 3–203 form the HORMA domain; sequence RWVEKWLRVY…PPKIKLTSLV (201 aa).

The protein belongs to the MAD2 family. As to quaternary structure, forms DNA polymerase zeta with REV3. Interacts with REV1.

The protein localises to the mitochondrion. Its function is as follows. Required for DNA damage induced mutagenesis. Involved in DNA repair, mitochondrial DNA repair and translesion synthesis. Has a role in the bypass of abasic (AP) sites. In Saccharomyces cerevisiae (strain ATCC 204508 / S288c) (Baker's yeast), this protein is DNA polymerase zeta processivity subunit (REV7).